The sequence spans 1400 residues: DNA-directed RNA polymerase subunit beta' (1400 aa).

4 residues coordinate Zn(2+): cysteine 70, cysteine 72, cysteine 85, and cysteine 88. Residues aspartate 460, aspartate 462, and aspartate 464 each contribute to the Mg(2+) site. Zn(2+)-binding residues include cysteine 814, cysteine 888, cysteine 895, and cysteine 898. Residues 1368–1400 (RQAKRAEAQEGPSAEQATDNLAALLNAGFSSDE) are disordered.

The protein belongs to the RNA polymerase beta' chain family. As to quaternary structure, the RNAP catalytic core consists of 2 alpha, 1 beta, 1 beta' and 1 omega subunit. When a sigma factor is associated with the core the holoenzyme is formed, which can initiate transcription. It depends on Mg(2+) as a cofactor. Zn(2+) serves as cofactor.

The catalysed reaction is RNA(n) + a ribonucleoside 5'-triphosphate = RNA(n+1) + diphosphate. DNA-dependent RNA polymerase catalyzes the transcription of DNA into RNA using the four ribonucleoside triphosphates as substrates. This is DNA-directed RNA polymerase subunit beta' from Vibrio parahaemolyticus serotype O3:K6 (strain RIMD 2210633).